Here is a 119-residue protein sequence, read N- to C-terminus: Ribonuclease (119 aa).

Positions 6 and 9 each coordinate substrate. The active-site Proton acceptor is His-11. Disulfide bonds link Cys-26-Cys-81, Cys-40-Cys-92, and Cys-58-Cys-107. Residues 41-45 and Arg-82 each bind substrate; that span reads KFTNT. The active-site Proton donor is His-114.

It belongs to the pancreatic ribonuclease family. Monomer. Interacts with and forms tight 1:1 complexes with RNH1. Dimerization of two such complexes may occur. Interaction with RNH1 inhibits this protein. Pancreas.

The protein resides in the secreted. It catalyses the reaction an [RNA] containing cytidine + H2O = an [RNA]-3'-cytidine-3'-phosphate + a 5'-hydroxy-ribonucleotide-3'-[RNA].. The catalysed reaction is an [RNA] containing uridine + H2O = an [RNA]-3'-uridine-3'-phosphate + a 5'-hydroxy-ribonucleotide-3'-[RNA].. Endonuclease that catalyzes the cleavage of RNA on the 3' side of pyrimidine nucleotides. Acts on single-stranded and double-stranded RNA. The sequence is that of Ribonuclease from Chelydra serpentina (Snapping turtle).